A 117-amino-acid polypeptide reads, in one-letter code: Large ribosomal subunit protein uL23 (117 aa).

This sequence belongs to the universal ribosomal protein uL23 family. As to quaternary structure, part of the 50S ribosomal subunit. Contacts protein L29, and trigger factor when it is bound to the ribosome.

One of the early assembly proteins it binds 23S rRNA. One of the proteins that surrounds the polypeptide exit tunnel on the outside of the ribosome. Forms the main docking site for trigger factor binding to the ribosome. The protein is Large ribosomal subunit protein uL23 of Acetivibrio thermocellus (strain ATCC 27405 / DSM 1237 / JCM 9322 / NBRC 103400 / NCIMB 10682 / NRRL B-4536 / VPI 7372) (Clostridium thermocellum).